The chain runs to 132 residues: Small ribosomal subunit protein uS11 (132 aa).

It belongs to the universal ribosomal protein uS11 family. As to quaternary structure, part of the 30S ribosomal subunit.

In terms of biological role, located on the platform of the 30S subunit. This Sulfurisphaera tokodaii (strain DSM 16993 / JCM 10545 / NBRC 100140 / 7) (Sulfolobus tokodaii) protein is Small ribosomal subunit protein uS11.